The chain runs to 252 residues: Small ribosomal subunit protein uS2A (252 aa).

At Ser-2 the chain carries N-acetylserine. The interval 209–252 is disordered; that stretch reads EVEQQAAEETTSTGADAEESKEEVAEGQNEASEWAEENTEAVSW. Positions 241 to 252 are enriched in acidic residues; sequence EWAEENTEAVSW.

It belongs to the universal ribosomal protein uS2 family. As to quaternary structure, component of the small ribosomal subunit. Mature ribosomes consist of a small (40S) and a large (60S) subunit. The 40S subunit contains about 33 different proteins and 1 molecule of RNA (18S). The 60S subunit contains about 49 different proteins and 3 molecules of RNA (25S, 5.8S and 5S). Interacts with RPS21.

Its subcellular location is the cytoplasm. In terms of biological role, required for the assembly and/or stability of the 40S ribosomal subunit. Required for the processing of the 20S rRNA-precursor to mature 18S rRNA in a late step of the maturation of 40S ribosomal subunits. The polypeptide is Small ribosomal subunit protein uS2A (Vanderwaltozyma polyspora (strain ATCC 22028 / DSM 70294 / BCRC 21397 / CBS 2163 / NBRC 10782 / NRRL Y-8283 / UCD 57-17) (Kluyveromyces polysporus)).